We begin with the raw amino-acid sequence, 428 residues long: Probable oxidoreductase OrdL (428 aa).

The chain is Probable oxidoreductase OrdL (ordL) from Rhizobium meliloti (strain 1021) (Ensifer meliloti).